We begin with the raw amino-acid sequence, 196 residues long: MKKVLVLLSSPVAKENSYSTYFATKFVEEYQKINQEDEIKIIDLNSFDVSQKTLTSGNFATFFNENDSDALINELKSVDKLIVASPMINFNVPATLKNYLDHICVANKTFSYKYKAKGASIGLLDHLKVQIITSQGAPSGWYSFSSHTKYLEGLFNFLGIEIAPSIEITGTKVDPKPKEELYLEFEQEIIKKASEF.

Residues serine 10 and 17 to 19 contribute to the FMN site; that span reads SYS.

The protein belongs to the azoreductase type 1 family. Homodimer. FMN serves as cofactor.

The catalysed reaction is 2 a quinone + NADH + H(+) = 2 a 1,4-benzosemiquinone + NAD(+). The enzyme catalyses N,N-dimethyl-1,4-phenylenediamine + anthranilate + 2 NAD(+) = 2-(4-dimethylaminophenyl)diazenylbenzoate + 2 NADH + 2 H(+). Functionally, quinone reductase that provides resistance to thiol-specific stress caused by electrophilic quinones. Also exhibits azoreductase activity. Catalyzes the reductive cleavage of the azo bond in aromatic azo compounds to the corresponding amines. The polypeptide is FMN-dependent NADH:quinone oxidoreductase (Metamycoplasma arthritidis (strain 158L3-1) (Mycoplasma arthritidis)).